A 177-amino-acid chain; its full sequence is Large ribosomal subunit protein uL6 (177 aa).

Belongs to the universal ribosomal protein uL6 family. Part of the 50S ribosomal subunit.

In terms of biological role, this protein binds to the 23S rRNA, and is important in its secondary structure. It is located near the subunit interface in the base of the L7/L12 stalk, and near the tRNA binding site of the peptidyltransferase center. This Salmonella newport (strain SL254) protein is Large ribosomal subunit protein uL6.